Consider the following 254-residue polypeptide: Mannose-binding protein (254 aa).

Residues 1 to 19 form the signal peptide; it reads MTLLQPFSALLLCLSLMMA. Residues 46–99 form a disordered region; it reads NGLPGRDGRDGPKGEKGDPGEGLRGLQGLPGKAGPQGLKGEVGPQGEKGQKGER. Positions 51-66 are enriched in basic and acidic residues; sequence RDGRDGPKGEKGDPGE. 4-hydroxyproline is present on proline 57. Residues lysine 58 and lysine 61 each carry the 5-hydroxylysine modification. O-linked (Gal...) hydroxylysine glycosylation is found at lysine 58 and lysine 61. Proline 75 is subject to 4-hydroxyproline. Lysine 93 and lysine 96 each carry 5-hydroxylysine. The region spanning 140–250 is the C-type lectin domain; it reads VGKKMFVSTG…LDCSNSNIFI (111 aa). 2 cysteine pairs are disulfide-bonded: cysteine 161-cysteine 252 and cysteine 229-cysteine 243.

As to quaternary structure, oligomeric complex of 3 or more homotrimers.

The protein resides in the secreted. Calcium-dependent lectin involved in innate immune defense. Binds mannose, fucose and N-acetylglucosamine on different microorganisms and activates the lectin complement pathway. The sequence is that of Mannose-binding protein from Gallus gallus (Chicken).